The chain runs to 151 residues: Secreted RxLR effector protein 30 (151 aa).

The signal sequence occupies residues 1–19; it reads MRSSTILIVLGIAILAVNG. Positions 38–53 match the RxLR-dEER motif; that stretch reads RLLRSTSTEHETDEER.

It belongs to the RxLR effector family.

The protein resides in the secreted. It localises to the host nucleus. In terms of biological role, effector that acts as a broad suppressor of cell death to interrupt plant immunity. Inhibits cell death induced by cell death-inducing proteins, including the PAMP elicitor INF1 from P.infestans. This Plasmopara viticola (Downy mildew of grapevine) protein is Secreted RxLR effector protein 30.